The primary structure comprises 462 residues: Argininosuccinate lyase (462 aa).

Belongs to the lyase 1 family. Argininosuccinate lyase subfamily.

It is found in the cytoplasm. It carries out the reaction 2-(N(omega)-L-arginino)succinate = fumarate + L-arginine. It participates in amino-acid biosynthesis; L-arginine biosynthesis; L-arginine from L-ornithine and carbamoyl phosphate: step 3/3. The sequence is that of Argininosuccinate lyase from Thermus thermophilus (strain ATCC BAA-163 / DSM 7039 / HB27).